The sequence spans 101 residues: Iron-sulfur cluster assembly protein CyaY (101 aa).

Belongs to the frataxin family.

Involved in iron-sulfur (Fe-S) cluster assembly. May act as a regulator of Fe-S biogenesis. The chain is Iron-sulfur cluster assembly protein CyaY from Rickettsia akari (strain Hartford).